A 98-amino-acid polypeptide reads, in one-letter code: NADH-ubiquinone oxidoreductase chain 4L (98 aa).

The next 3 membrane-spanning stretches (helical) occupy residues 1 to 21, 29 to 49, and 61 to 81; these read MSMV…GLLM, SLLC…MTIL, and IILL…LVMV.

It belongs to the complex I subunit 4L family. As to quaternary structure, core subunit of respiratory chain NADH dehydrogenase (Complex I) which is composed of 45 different subunits.

The protein resides in the mitochondrion inner membrane. It catalyses the reaction a ubiquinone + NADH + 5 H(+)(in) = a ubiquinol + NAD(+) + 4 H(+)(out). In terms of biological role, core subunit of the mitochondrial membrane respiratory chain NADH dehydrogenase (Complex I) which catalyzes electron transfer from NADH through the respiratory chain, using ubiquinone as an electron acceptor. Part of the enzyme membrane arm which is embedded in the lipid bilayer and involved in proton translocation. The chain is NADH-ubiquinone oxidoreductase chain 4L (MT-ND4L) from Phocarctos hookeri (Hooker's sea lion).